The primary structure comprises 1349 residues: Indole-3-acetaldehyde oxidase (1349 aa).

The 2Fe-2S ferredoxin-type domain maps to A7–I94. Residues C46, C51, and C54 each contribute to the [2Fe-2S] cluster site. One can recognise an FAD-binding PCMH-type domain in the interval V237–S415.

The protein belongs to the xanthine dehydrogenase family. As to quaternary structure, aldehyde oxidases (AO) are homodimers and heterodimers of AO subunits. Requires [2Fe-2S] cluster as cofactor. It depends on FAD as a cofactor. Mo-molybdopterin is required as a cofactor. In terms of tissue distribution, mostly expressed in coleoptiles, and, to a lower extent, in mesocotyl and roots.

The protein localises to the cytoplasm. It carries out the reaction indole-3-acetaldehyde + O2 + H2O = (indol-3-yl)acetate + H2O2 + H(+). Its function is as follows. In higher plants aldehyde oxidases (AO) appear to be homo- and heterodimeric assemblies of AO subunits with probably different physiological functions. Involved in the biosynthesis of auxin. The polypeptide is Indole-3-acetaldehyde oxidase (AO2) (Zea mays (Maize)).